The chain runs to 219 residues: Leukocyte surface antigen CD53 (219 aa).

At 1 to 11 (MGMSSLKLLKF) the chain is on the cytoplasmic side. A helical membrane pass occupies residues 12–32 (VLFFFNLIFWFCGCCILGLGI). Residues 33 to 54 (YLLIHSKFGVLFHNLPSLTLGN) are Extracellular-facing. A helical transmembrane segment spans residues 55–69 (VLVIVGSVIMVVAFL). Over 70-80 (GCMGSIKENKC) the chain is Cytoplasmic. The helical transmembrane segment at 81–106 (LLMSFFVLLLIILLAEVTLAILLFVY) threads the bilayer. The Extracellular portion of the chain corresponds to 107–181 (EQKLKEYVAE…IQAKQWFHSN (75 aa)). 2 N-linked (GlcNAc...) asparagine glycosylation sites follow: Asn129 and Asn148. Residues 182 to 206 (FLYIGITTICVCVIQVLGMSFALTL) form a helical membrane-spanning segment. The Cytoplasmic portion of the chain corresponds to 207–219 (NCQIDKTSQVLGL).

This sequence belongs to the tetraspanin (TM4SF) family. In terms of assembly, interacts with SCIMP. Interacts with CD45/PTPRC. Interacts with IL7R. Interacts with RBL2 and PPP2CA.

It is found in the cell membrane. The protein localises to the cell junction. The protein resides in the membrane. Its subcellular location is the synapse. In terms of biological role, structural component of specialized membrane microdomains known as tetraspanin-enriched microdomains (TERMs), which act as platforms for receptor clustering and signaling. Participates thereby in diverse biological functions such as cell signal transduction, adhesion, migration and protein trafficking. Plays a role in the activation of monocytes and B-cells. Acts as an essential regulator of B-cell development by promoting interleukin-7 receptor/IL7R signaling. Also promotes, in B-cells, the BCR signaling by recruiting PKC to the plasma membrane in order to phosphorylate its substrates. Plays an essential role in B- and T-cells homing to lymph nodes by stabilizing L-selectin/SELL cell surface expression. Also mediates metabolic and inflammatory functions in hepatocytes and adipose tissue by promoting TNF-alpha and LPS signaling independent of the immune compartment. This chain is Leukocyte surface antigen CD53 (CD53), found in Bos taurus (Bovine).